We begin with the raw amino-acid sequence, 1286 residues long: Lysine-specific demethylase JMJ705 (1286 aa).

The JmjN domain occupies 25 to 66 (APEFRPTAAEFADPVSYILKIEPAAAPYGICKVVPPLPPPPK). Residues 82–105 (PDDRSPSFPTRHQQVGLCPRRTRP) form a disordered region. A JmjC domain is found at 201–367 (ETAWNMRGVA…IAKEAAIRRA (167 aa)). Residues His244, Glu246, and His335 each coordinate Fe cation. Over residues 641 to 679 (PNSSNNVGCVGTKLSSSSTERQERPSSQNAHCNGSSVIS) the composition is skewed to polar residues. Disordered stretches follow at residues 641–686 (PNSS…KGVR), 1013–1060 (AEPV…HSQE), and 1077–1164 (PAGT…PKQA). The segment covering 1119–1136 (HASGQKSNVQEANANSAS) has biased composition (polar residues). A C2H2-type 1; degenerate zinc finger spans residues 1167–1189 (YSCDIEGCSMSFRTKRDLSLHKS). C2H2-type zinc fingers lie at residues 1190 to 1214 (DICP…RKVH), 1220 to 1244 (LTCP…LRVH), and 1250 to 1276 (YVCH…KTGH).

Requires Fe(2+) as cofactor. In terms of tissue distribution, expressed in leaves and flag leaves. Expressed at low levels in roots, shoots, stems and panicles.

The protein resides in the nucleus. It carries out the reaction N(6),N(6),N(6)-trimethyl-L-lysyl(27)-[histone H3] + 2 2-oxoglutarate + 2 O2 = N(6)-methyl-L-lysyl(27)-[histone H3] + 2 formaldehyde + 2 succinate + 2 CO2. In terms of biological role, histone demethylase that demethylates 'Lys-27' (H3K27me) of histone H3 with a specific activity for H3K27me3 and H3K27me2. No activity on H3K4me3, H3K9me3, H3K27me1 and H3K36me3. Involved in biotic stress response. May demethylate H3K27me3-marked defense-related genes and increase their basal and induced expression levels during pathogen infection. The polypeptide is Lysine-specific demethylase JMJ705 (JMJ705) (Oryza sativa subsp. japonica (Rice)).